Here is a 505-residue protein sequence, read N- to C-terminus: Aminoaldehyde dehydrogenase 1a (505 aa).

Residue D101 participates in Na(+) binding. NAD(+)-binding positions include 161 to 163 and 187 to 190; these read TPW and KPSE. A Na(+)-binding site is contributed by L191. Residues 241–244 and E262 contribute to the NAD(+) site; that span reads SFET. Residue E262 is the Proton acceptor of the active site. Residue C296 is the Nucleophile of the active site. NAD(+) contacts are provided by E395 and W461.

Belongs to the aldehyde dehydrogenase family. Forms homodimers.

The catalysed reaction is 4-aminobutanal + NAD(+) + H2O = 4-aminobutanoate + NADH + 2 H(+). It carries out the reaction 3-aminopropanal + NAD(+) + H2O = beta-alanine + NADH + 2 H(+). The enzyme catalyses 4-(trimethylamino)butanal + NAD(+) + H2O = 4-(trimethylamino)butanoate + NADH + 2 H(+). It catalyses the reaction 4-guanidinobutanal + NAD(+) + H2O = 4-guanidinobutanoate + NADH + 2 H(+). The catalysed reaction is betaine aldehyde + NAD(+) + H2O = glycine betaine + NADH + 2 H(+). It functions in the pathway amine and polyamine biosynthesis; betaine biosynthesis via choline pathway; betaine from betaine aldehyde: step 1/1. Functionally, dehydrogenase that catalyzes the oxidation of several aminoaldehydes. Metabolizes and detoxifies aldehyde products of polyamine degradation to non-toxic amino acids. Catalyzes the oxidation of 4-aminobutanal and 3-aminopropanal to 4-aminobutanoate and beta-alanine, respectively. Catalyzes the oxidation of 4-(trimethylamino)butanal and 4-guanidinobutanal to 4-trimethylammoniobutanoate and 4-guanidinobutanoate, respectively. Catalyzes the oxidation of betaine aldehyde to glycine betaine. In terms of biological role, dehydrogenase that catalyzes the oxidation of several aminoaldehydes. Catalyzes the oxidation of betaine aldehyde to glycine betaine. Catalyzes the oxidation of 4-(trimethylamino)butanal to 4-trimethylammoniobutanoate. This Zea mays (Maize) protein is Aminoaldehyde dehydrogenase 1a.